A 565-amino-acid polypeptide reads, in one-letter code: Proline--tRNA ligase (565 aa).

This sequence belongs to the class-II aminoacyl-tRNA synthetase family. ProS type 1 subfamily. Homodimer.

It is found in the cytoplasm. It catalyses the reaction tRNA(Pro) + L-proline + ATP = L-prolyl-tRNA(Pro) + AMP + diphosphate. Its function is as follows. Catalyzes the attachment of proline to tRNA(Pro) in a two-step reaction: proline is first activated by ATP to form Pro-AMP and then transferred to the acceptor end of tRNA(Pro). As ProRS can inadvertently accommodate and process non-cognate amino acids such as alanine and cysteine, to avoid such errors it has two additional distinct editing activities against alanine. One activity is designated as 'pretransfer' editing and involves the tRNA(Pro)-independent hydrolysis of activated Ala-AMP. The other activity is designated 'posttransfer' editing and involves deacylation of mischarged Ala-tRNA(Pro). The misacylated Cys-tRNA(Pro) is not edited by ProRS. This chain is Proline--tRNA ligase, found in Lactobacillus acidophilus (strain ATCC 700396 / NCK56 / N2 / NCFM).